We begin with the raw amino-acid sequence, 218 residues long: Leucine-rich repeat protein 2 (218 aa).

A signal peptide spans 1 to 27; sequence MVAQNSRRELLAASLILTLALIRLTEA. LRR repeat units follow at residues 69–93, 94–117, 119–141, 142–165, and 167–190; these read HHQV…LGKL, EHLQ…LGNL, SLIS…LGKL, KSLV…LTVI, and SLKV…PFEH.

Probably involved in plant defense response. This is Leucine-rich repeat protein 2 from Arabidopsis thaliana (Mouse-ear cress).